The sequence spans 216 residues: uncharacterized protein (216 aa).

The chain crosses the membrane as a helical span at residues 5 to 22; sequence LGLVFGSVILIYLISLFL.

The protein resides in the membrane. This is an uncharacterized protein from Aquifex aeolicus (strain VF5).